A 421-amino-acid chain; its full sequence is Proton/sodium-glutamate symport protein (421 aa).

Residues 1 to 3 (MRK) lie on the Cytoplasmic side of the membrane. The helical transmembrane segment at 4–24 (IGLAWQIFIGLILGIIVGAIF) threads the bilayer. The Extracellular portion of the chain corresponds to 25–43 (YGNPKVAAYLQPIGDIFLR). The helical transmembrane segment at 44–64 (LIKMIVIPIVISSLVVGVASV) threads the bilayer. Topologically, residues 65-77 (GDLKKLGKLGGKT) are cytoplasmic. Residues 78–98 (IIYFEIITTIAIVVGLLAANI) traverse the membrane as a helical segment. The Extracellular portion of the chain corresponds to 99–148 (FQPGAGVNMKSLEKTDIQSYVDTTNEVQHHSMVETFVNIVPKNIFESLST). The chain crosses the membrane as a helical span at residues 149 to 169 (GDMLPIIFFSVMFGLGVAAIG). The Cytoplasmic portion of the chain corresponds to 170-198 (EKGKPVLQFFQGTAEAMFYVTNQIMKFAP). Residues 199–219 (FGVFALIGVTVSKFGVESLIP) form a helical membrane-spanning segment. The Extracellular portion of the chain corresponds to 220–222 (LSK). The helical transmembrane segment at 223–243 (LVIVVYATMLFFIFAVLGGVA) threads the bilayer. Lysine 244 is a topological domain (cytoplasmic). Residues 245–265 (LFGINIFHIIKILKDELILAY) form a helical membrane-spanning segment. Over 266–306 (STASSETVLPRIMDKMEKFGCPKAITSFVIPTGYSFNLDGS) the chain is Extracellular. A helical membrane pass occupies residues 307-327 (TLYQALAAIFIAQLYGIDMSV). Topologically, residues 328-330 (SQQ) are cytoplasmic. 2 helical membrane-spanning segments follow: residues 331–351 (ISLL…PGVS) and 352–372 (FVVL…LAFI). Topologically, residues 373–421 (AGIDRILDMARTAVNVIGNSLAAIIMSKWEGQYNEEKGKQYLAELQQSA) are cytoplasmic.

It belongs to the dicarboxylate/amino acid:cation symporter (DAACS) (TC 2.A.23) family. As to quaternary structure, homotrimer.

The protein resides in the cell membrane. Its function is as follows. This carrier protein is part of the Na(+)-dependent, binding-protein-independent glutamate-aspartate transport system. The polypeptide is Proton/sodium-glutamate symport protein (gltT) (Bacillus caldotenax).